Reading from the N-terminus, the 618-residue chain is Sodium/iodide cotransporter (618 aa).

Residues 1–14 (MEGAEAGARATFGA) are Extracellular-facing. Residues 15–31 (WDYGVFATMLLVSTGIG) traverse the membrane as a helical segment. Residues 32–56 (LWVGLARGGQRSADDFFTGGRQLAA) are Cytoplasmic-facing. Residues 57 to 80 (VPVGLSLAASFMSAVQVLGVPAEA) form a discontinuously helical membrane-spanning segment. The Na(+) site is built by Ser-69, Val-71, and Gln-72. Val-76 is an iodide binding site. Residues 81 to 84 (ARYG) are Extracellular-facing. The chain crosses the membrane as a helical span at residues 85 to 105 (LKFLWMCAGQLLNSLLTAFLF). Met-90 is an iodide binding site. At 106–130 (LPIFYRLGLTSTYQYLELRFSRAVR) the chain is on the cytoplasmic side. The chain crosses the membrane as a helical span at residues 131–157 (LCGTLQYLVATMLYTGIVIYAPALILN). Tyr-144 is a Na(+) binding site. Over 158–163 (QVTGLD) the chain is Extracellular. A helical membrane pass occupies residues 164–181 (IWASLLSTGIICTLYTTV). The Cytoplasmic segment spans residues 182 to 189 (GGMKAVVW). The helical transmembrane segment at 190–208 (TDVFQVVVMLVGFWVILAR) threads the bilayer. Residues 209–243 (GVILLGGPRNVLSLAQNHSRINLMDFDPDPRSRYT) are Extracellular-facing. Residues 244-266 (FWTFIVGGTLVWLSMYGVNQAQV) form a discontinuously helical membrane-spanning segment. Trp-255 lines the iodide pocket. Met-258 is a Na(+) binding site. Residues 267–278 (QRYVACHTEGKA) are Cytoplasmic-facing. Residues 279–301 (KLALLVNQLGLFLIVASAACCGI) traverse the membrane as a helical segment. Topologically, residues 302–335 (VMFVYYKDCDPLLTGRISAPDQYMPLLVLDIFED) are extracellular. The helical transmembrane segment at 336–363 (LPGVPGLFLACAYSGTLSTASTSINAMA) threads the bilayer. The Cytoplasmic portion of the chain corresponds to 364-386 (AVTVEDLIKPRMPGLAPRKLVFI). The chain crosses the membrane as a helical span at residues 387-408 (SKGLSFIYGSACLTVAALSSLL). The Extracellular segment spans residues 409-411 (GGG). Residues 412-437 (VLQGSFTVMGVISGPLLGAFTLGMLL) traverse the membrane as a helical segment. Residue Leu-413 coordinates iodide. The Na(+) site is built by Ser-416 and Phe-417. Position 417 (Phe-417) interacts with iodide. The Cytoplasmic portion of the chain corresponds to 438–441 (PACN). Residues 442-465 (TPGVLSGLAAGLAVSLWVAVGATL) form a helical membrane-spanning segment. Topologically, residues 466–520 (YPPGEQTMGVLPTSAAGCTNDSVLLGPPGATNASNGIPSSGMDTGRPALADTFYA) are extracellular. Residues Asn-485 and Asn-497 are each glycosylated (N-linked (GlcNAc...) asparagine). A helical membrane pass occupies residues 521–545 (ISYLYYGALGTLTTMLCGALISYLT). The Cytoplasmic portion of the chain corresponds to 546–618 (GPTKRSSLGP…YLGHDVETNL (73 aa)). Ser-551 is modified (phosphoserine; by PKA). The tract at residues 587-618 (EDIPAVTKKPPGLKPGAETHPLYLGHDVETNL) is disordered.

It belongs to the sodium:solute symporter (SSF) (TC 2.A.21) family. As to quaternary structure, monomer.

The protein resides in the cell membrane. It is found in the cytoplasm. It catalyses the reaction iodide(out) + 2 Na(+)(out) = iodide(in) + 2 Na(+)(in). The catalysed reaction is chlorate(out) + 2 Na(+)(out) = chlorate(in) + 2 Na(+)(in). The enzyme catalyses thiocyanate(out) + 2 Na(+)(out) = thiocyanate(in) + 2 Na(+)(in). It carries out the reaction nitrate(out) + 2 Na(+)(out) = nitrate(in) + 2 Na(+)(in). It catalyses the reaction selenocyanate(out) + 2 Na(+)(out) = selenocyanate(in) + 2 Na(+)(in). Its activity is regulated as follows. Perchlorate inhibits iodide transport activity. Oxyanions inhibit iodide transport activity by blocking the binding sites for iodide and one of the sodium ions. Its function is as follows. Sodium:iodide symporter that mediates the transport of iodide into the thyroid gland. Can also mediate the transport of chlorate, thiocynate, nitrate and selenocynate. The sequence is that of Sodium/iodide cotransporter (Slc5a5) from Rattus norvegicus (Rat).